We begin with the raw amino-acid sequence, 79 residues long: Small ribosomal subunit protein uS17 (79 aa).

The protein belongs to the universal ribosomal protein uS17 family. As to quaternary structure, part of the 30S ribosomal subunit.

Functionally, one of the primary rRNA binding proteins, it binds specifically to the 5'-end of 16S ribosomal RNA. The protein is Small ribosomal subunit protein uS17 of Paramagnetospirillum magneticum (strain ATCC 700264 / AMB-1) (Magnetospirillum magneticum).